A 140-amino-acid polypeptide reads, in one-letter code: uncharacterized protein (140 aa).

This is an uncharacterized protein from Bacillus subtilis (strain 168).